Here is a 58-residue protein sequence, read N- to C-terminus: Large ribosomal subunit protein bL32 (58 aa).

The protein belongs to the bacterial ribosomal protein bL32 family.

This chain is Large ribosomal subunit protein bL32, found in Synechococcus sp. (strain WH7803).